The sequence spans 313 residues: HPr kinase/phosphorylase (313 aa).

Active-site residues include histidine 136 and lysine 157. 151 to 158 (GDSGIGKS) contributes to the ATP binding site. Mg(2+) is bound at residue serine 158. The active-site Proton acceptor; for phosphorylation activity. Proton donor; for dephosphorylation activity is aspartate 175. Residues 199-208 (LEIRGLGIIN) form an important for the catalytic mechanism of both phosphorylation and dephosphorylation region. Glutamate 200 serves as a coordination point for Mg(2+). Arginine 241 is a catalytic residue. The interval 262–267 (PVRPGR) is important for the catalytic mechanism of dephosphorylation.

It belongs to the HPrK/P family. Homohexamer. The cofactor is Mg(2+).

It carries out the reaction [HPr protein]-L-serine + ATP = [HPr protein]-O-phospho-L-serine + ADP + H(+). The catalysed reaction is [HPr protein]-O-phospho-L-serine + phosphate + H(+) = [HPr protein]-L-serine + diphosphate. Functionally, catalyzes the ATP- as well as the pyrophosphate-dependent phosphorylation of a specific serine residue in HPr, a phosphocarrier protein of the phosphoenolpyruvate-dependent sugar phosphotransferase system (PTS). HprK/P also catalyzes the pyrophosphate-producing, inorganic phosphate-dependent dephosphorylation (phosphorolysis) of seryl-phosphorylated HPr (P-Ser-HPr). The two antagonistic activities of HprK/P are regulated by several intracellular metabolites, which change their concentration in response to the absence or presence of rapidly metabolisable carbon sources (glucose, fructose, etc.) in the growth medium. Therefore, by controlling the phosphorylation state of HPr, HPrK/P is a sensor enzyme that plays a major role in the regulation of carbon metabolism and sugar transport: it mediates carbon catabolite repression (CCR), and regulates PTS-catalyzed carbohydrate uptake and inducer exclusion. In Staphylococcus saprophyticus subsp. saprophyticus (strain ATCC 15305 / DSM 20229 / NCIMB 8711 / NCTC 7292 / S-41), this protein is HPr kinase/phosphorylase.